The primary structure comprises 273 residues: Transposon Tn7 transposition protein TnsA (273 aa).

Active-site residues include Glu-63 and Glu-73. The H-T-H motif DNA-binding region spans 90–108 (TRQIAIDSGIKHPVIRGVD). Asp-114 is an active-site residue. 3 residues coordinate Mg(2+): Asp-114, Gln-130, and Val-131. Residue Lys-132 is part of the active site.

In terms of assembly, heteromer with TnsB. Interacts with TnsC (via C-terminus); this interaction allows TnsA to bind donor DNA. The cofactor is Mg(2+). Mn(2+) serves as cofactor.

Its function is as follows. Required for Tn7 transposition. Forms the transposase, together with TnsB. TnsA executes the 5'-DNA strand breakage reaction. TnsABC and TnsD promote high-frequency insertion of Tn7 into a specific target site known as att-Tn7 whereas TnsABC and TnsE promote low-frequency insertion into many different sites. The protein is Transposon Tn7 transposition protein TnsA of Escherichia coli.